The chain runs to 116 residues: Large ribosomal subunit protein uL24c (116 aa).

Belongs to the universal ribosomal protein uL24 family. As to quaternary structure, part of the 50S ribosomal subunit.

Its subcellular location is the plastid. It is found in the chloroplast. Functionally, one of two assembly initiator proteins, it binds directly to the 5'-end of the 23S rRNA, where it nucleates assembly of the 50S subunit. This chain is Large ribosomal subunit protein uL24c (rpl24), found in Pyropia yezoensis (Susabi-nori).